The following is a 350-amino-acid chain: Enoyl-[acyl-carrier-protein] reductase, mitochondrial (350 aa).

A mitochondrion-targeting transit peptide spans 1–12; sequence MWLGLRLFHRPF. Y68 (proton donor) is an active-site residue. NADP(+) is bound by residues N141, 167-170, 190-192, 259-262, 284-286, and K345; these read NSGV, RDR, YGGM, and FWV.

Belongs to the zinc-containing alcohol dehydrogenase family. Quinone oxidoreductase subfamily. Homodimer. Expressed in the developing pronephros.

The protein localises to the mitochondrion. It carries out the reaction a 2,3-saturated acyl-[ACP] + NADP(+) = a (2E)-enoyl-[ACP] + NADPH + H(+). Its function is as follows. Catalyzes the NADPH-dependent reduction of trans-2-enoyl thioesters in mitochondrial fatty acid synthesis (fatty acid synthesis type II). Fatty acid chain elongation in mitochondria uses acyl carrier protein (ACP) as an acyl group carrier, but the enzyme accepts both ACP and CoA thioesters as substrates in vitro. May provide the octanoyl chain used for lipoic acid biosynthesis, regulating protein lipoylation and mitochondrial respiratory activity. Involved in iron homeostasis; affecting Fe-S cluster assembly and ceramide metabolism. Required for proper morphology and bioenergetic functions of mitochondria. Required for maintenance of neurons. Functions in pronephros development, regulating late differentiation of all pronephric tubule segments. In Xenopus tropicalis (Western clawed frog), this protein is Enoyl-[acyl-carrier-protein] reductase, mitochondrial (mecr).